We begin with the raw amino-acid sequence, 136 residues long: Small ribosomal subunit protein uS11c (136 aa).

It belongs to the universal ribosomal protein uS11 family. In terms of assembly, part of the 30S ribosomal subunit.

Its subcellular location is the plastid. It is found in the chloroplast. This Guizotia abyssinica (Niger) protein is Small ribosomal subunit protein uS11c.